The chain runs to 735 residues: Serine/threonine-protein kinase BRSK2 (735 aa).

Residues 20–271 (YRLEKTLGKG…LEHIQKHIWY (252 aa)) form the Protein kinase domain. ATP-binding positions include 26-34 (LGKGQTGLV) and Lys49. The Proton acceptor role is filled by Asp142. Thr175 is subject to Phosphothreonine; by LKB1. Phosphothreonine; by PKA is present on Thr261. Residue Ser295 is modified to Phosphoserine. The UBA domain maps to 298-340 (DIDPDVLDSMHSLGCFRDRNKLLQDLLSEEENQEKMIYFLLLD). Positions 346–367 (PSHEDEDLPPRNEIDPPRKRVD) are enriched in basic and acidic residues. Disordered stretches follow at residues 346-476 (PSHE…GVPW) and 492-516 (RFHR…SSPE). 6 positions are modified to phosphoserine: Ser368, Ser383, Ser394, Ser413, Ser424, and Ser428. Positions 411 to 429 (SRSISGASSGLSTSPLSSP) are enriched in low complexity. Residues 432 to 446 (TPHPSPRGSPLPTPK) show a composition bias toward pro residues. At Ser456 the chain carries Phosphoserine. Phosphothreonine is present on residues Thr460, Thr464, and Thr510. A phosphoserine mark is found at Ser513, Ser514, and Ser521. The short motif at 604–606 (KEN) is the KEN box element. The segment at 682–735 (KNGQAAQAPSTPAKRSAHGPLGDSAAAGPGGDTEYPMGKDMAKMGPPAARREQP) is disordered.

The protein belongs to the protein kinase superfamily. CAMK Ser/Thr protein kinase family. SNF1 subfamily. As to quaternary structure, interacts with FZR1, a regulatory subunit of the APC ubiquitin ligase complex. Interacts with COPS5. Interacts with PAK1. Requires Mg(2+) as cofactor. In terms of processing, may be phosphorylated at Thr-261 by PKA. Phosphorylated at Thr-175 by STK11/LKB1 in complex with STE20-related adapter-alpha (STRADA) pseudo kinase and CAB39. Not phosphorylated at Thr-175 by CaMKK2. In contrast, it is phosphorylated and activated by CaMKK1. May be inactivated via dephosphorylation of Thr-175 by PP2C. Polyubiquitinated by the APC complex in conjunction with FZR1, leading to its proteasomal degradation. Targeted for proteasomal degradation by interaction with COPS5. BRSK2 levels change during the cell cycle. BRSK2 levels are low at the G1/S boundary and gradually increase as cells progress into G2 phase. BRSK2 levels decrease rapidly at the end of mitosis. In terms of tissue distribution, detected in pancreas islets and in brain (at protein level). Detected in brain and pancreas.

The protein localises to the cytoplasm. Its subcellular location is the cytoskeleton. It is found in the microtubule organizing center. It localises to the centrosome. The protein resides in the perinuclear region. The protein localises to the endoplasmic reticulum. It catalyses the reaction L-seryl-[protein] + ATP = O-phospho-L-seryl-[protein] + ADP + H(+). It carries out the reaction L-threonyl-[protein] + ATP = O-phospho-L-threonyl-[protein] + ADP + H(+). The catalysed reaction is L-seryl-[tau protein] + ATP = O-phospho-L-seryl-[tau protein] + ADP + H(+). The enzyme catalyses L-threonyl-[tau protein] + ATP = O-phospho-L-threonyl-[tau protein] + ADP + H(+). Activated by phosphorylation on Thr-175 by STK11/LKB1. Functionally, serine/threonine-protein kinase that plays a key role in polarization of neurons and axonogenesis, cell cycle progress and insulin secretion. Phosphorylates CDK16, CDC25C, MAPT/TAU, PAK1 and WEE1. Following phosphorylation and activation by STK11/LKB1, acts as a key regulator of polarization of cortical neurons, probably by mediating phosphorylation of microtubule-associated proteins such as MAPT/TAU at 'Thr-504' and 'Ser-554'. Also regulates neuron polarization by mediating phosphorylation of WEE1 at 'Ser-642' in post-mitotic neurons, leading to down-regulate WEE1 activity in polarized neurons. Plays a role in the regulation of the mitotic cell cycle progress and the onset of mitosis. Plays a role in the regulation of insulin secretion in response to elevated glucose levels, probably via phosphorylation of CDK16 and PAK1. While BRSK2 phosphorylated at Thr-175 can inhibit insulin secretion, BRSK2 phosphorylated at Thr-261 can promote insulin secretion. Regulates reorganization of the actin cytoskeleton. May play a role in the apoptotic response triggered by endoplasmic reticulum (ER) stress. The chain is Serine/threonine-protein kinase BRSK2 (Brsk2) from Mus musculus (Mouse).